We begin with the raw amino-acid sequence, 497 residues long: Probable cytosol aminopeptidase (497 aa).

Lys263 and Asp268 together coordinate Mn(2+). The active site involves Lys275. Mn(2+) contacts are provided by Asp286, Asp345, and Glu347. Residue Arg349 is part of the active site.

Belongs to the peptidase M17 family. Mn(2+) serves as cofactor.

The protein resides in the cytoplasm. The enzyme catalyses Release of an N-terminal amino acid, Xaa-|-Yaa-, in which Xaa is preferably Leu, but may be other amino acids including Pro although not Arg or Lys, and Yaa may be Pro. Amino acid amides and methyl esters are also readily hydrolyzed, but rates on arylamides are exceedingly low.. It catalyses the reaction Release of an N-terminal amino acid, preferentially leucine, but not glutamic or aspartic acids.. Presumably involved in the processing and regular turnover of intracellular proteins. Catalyzes the removal of unsubstituted N-terminal amino acids from various peptides. The protein is Probable cytosol aminopeptidase of Methylorubrum extorquens (strain CM4 / NCIMB 13688) (Methylobacterium extorquens).